The primary structure comprises 97 residues: uncharacterized protein (97 aa).

This is an uncharacterized protein from Bacillus subtilis (strain 168).